The following is a 302-amino-acid chain: HTH-type transcriptional regulator AbgR (302 aa).

Residues 5–62 enclose the HTH lysR-type domain; it reads VKIHQIRAFVEVARQGSIRGASRMLNMSQPALSKSIQELEEGLAAQLFFRRSKGVTLT. A DNA-binding region (H-T-H motif) is located at residues 22–41; the sequence is IRGASRMLNMSQPALSKSIQ.

Belongs to the LysR transcriptional regulatory family.

Functionally, could be the regulator of the abg operon. This is HTH-type transcriptional regulator AbgR (abgR) from Escherichia coli (strain K12).